The following is a 435-amino-acid chain: Nuclear hormone receptor family member nhr-28 (435 aa).

A DNA-binding region (nuclear receptor) is located at residues 5–80; it reads KKPCSVCGEA…VGMRKSAVQR (76 aa). 2 NR C4-type zinc fingers span residues 8–28 and 44–63; these read CSVCGEAGDGAHFGAEACRAC and CRAMGACIIQKNVRCMCRAC. The disordered stretch occupies residues 84–106; it reads LFGRQDSSDGSNPRVSPSTSWPM. Polar residues predominate over residues 91-104; it reads SDGSNPRVSPSTSW. Positions 113 to 374 constitute an NR LBD domain; it reads IEEPGMATLN…ETFYELVSGR (262 aa).

The protein belongs to the nuclear hormone receptor family.

It localises to the nucleus. Its function is as follows. Orphan nuclear receptor. This chain is Nuclear hormone receptor family member nhr-28, found in Caenorhabditis briggsae.